Reading from the N-terminus, the 100-residue chain is Small ribosomal subunit protein uS14 (100 aa).

The protein belongs to the universal ribosomal protein uS14 family. As to quaternary structure, part of the 30S ribosomal subunit. Contacts proteins S3 and S10.

Its function is as follows. Binds 16S rRNA, required for the assembly of 30S particles and may also be responsible for determining the conformation of the 16S rRNA at the A site. The sequence is that of Small ribosomal subunit protein uS14 from Picosynechococcus sp. (strain ATCC 27264 / PCC 7002 / PR-6) (Agmenellum quadruplicatum).